A 574-amino-acid chain; its full sequence is MGNNFSSVSSLQRGNPSRASRGHPQNLKDSIGGSFPVPSHRCHHKQKHCPPTLSGGGLPATPLLFHPHTKGSQILMDLSHKAVKRQASFCNAITFSNRPVLIYEQVRLKITKKQCCWSGALRLGFTSKDPSRIHPDSLPKYACPDLVSQSGFWAKALPEEFANEGNIIAFWVDKKGRVFYRINESAAMLFFSGVRTVDPLWALVDVYGLTRGVQLLDSELVLPDCLRPRSFTALRRPSLRCEADEARLSVSLCDLNVPGADGDDGAPPAGCPIPQNSLNSQHSRALPAQLDGDLRFHALRAGAHVRILDEQTVARLEHGRDERALVFTSRPVRVAETIFIKVTRSGGGRAGALSFGVTTCDPGTLRPADLPFSPEALVDRKEFWAVCRVPGPLHSGDILGLVVNADGELHLSHNGAAAGMQLCVDASQPLWMLFSLHGAITQVRILGSTIMTERGGPSLPCSPASTPTSPSALGIRLSDPLLSTCGSGPLGGSAGGTAPNSPVSLPESPVTPGLGQWSDECTICYEHAVDTVIYTCGHMCLCYSCGLRLKKALHACCPICRRPIKDIIKTYRSS.

Residues methionine 1–arginine 18 are compositionally biased toward polar residues. The tract at residues methionine 1–leucine 53 is disordered. A lipid anchor (N-myristoyl glycine) is attached at glycine 2. NHR domains are found at residues threonine 61–aspartate 217 and glycine 292–glycine 447. The segment at glutamate 520–cysteine 560 adopts an RING-type zinc-finger fold.

In terms of assembly, interacts with CPEB3 (via N-terminal domain); the interaction increases CPEB3 ubiquitination. Interacts with DLL1. Post-translationally, myristoylation is a determinant of membrane targeting. Expressed in CA1 pyramidal neurons (at protein level). Expressed throughout the adult forebrain, including the cerebral cortex, amygdala, striatum, and CA1 area of the hippocampus. Expressed in sensory neurons of the olfactory epithelium, the vomeronasal organ, mammary gland and skeletal muscle.

The protein resides in the cytoplasm. It is found in the perinuclear region. It localises to the cell membrane. Its subcellular location is the perikaryon. The protein localises to the cell projection. The protein resides in the dendrite. It is found in the postsynaptic density. The enzyme catalyses S-ubiquitinyl-[E2 ubiquitin-conjugating enzyme]-L-cysteine + [acceptor protein]-L-lysine = [E2 ubiquitin-conjugating enzyme]-L-cysteine + N(6)-ubiquitinyl-[acceptor protein]-L-lysine.. The protein operates within protein modification; protein ubiquitination. Functionally, plays a role in hippocampal-dependent synaptic plasticity, learning and memory. Involved in the formation of spines and functional synaptic contacts by modulating the translational activity of the cytoplasmic polyadenylation element-binding protein CPEB3. Promotes ubiquitination of CPEB3, and hence induces CPEB3-dependent mRNA translation activation of glutamate receptor GRIA1 and GRIA2. Can function as an E3 ubiquitin-protein ligase to activate monoubiquitination of JAG1 (in vitro), thereby regulating the Notch pathway. Acts as a tumor suppressor; inhibits malignant cell transformation of medulloblastoma (MB) cells by inhibiting the Notch signaling pathway. The protein is E3 ubiquitin-protein ligase NEURL1 (Neurl1) of Mus musculus (Mouse).